A 758-amino-acid chain; its full sequence is Long-chain-alcohol oxidase FAO1 (758 aa).

2 helical membrane passes run isoleucine 102–leucine 122 and proline 155–tryptophan 175. Cysteine 246 to alanine 261 contributes to the FAD binding site. Residue histidine 689 is the Proton acceptor of the active site.

It belongs to the GMC oxidoreductase family.

It localises to the membrane. The enzyme catalyses a long-chain primary fatty alcohol + O2 = a long-chain fatty aldehyde + H2O2. In terms of biological role, long-chain fatty alcohol oxidase involved in the omega-oxidation pathway of lipid degradation. This Arabidopsis thaliana (Mouse-ear cress) protein is Long-chain-alcohol oxidase FAO1 (FAO1).